The following is a 1174-amino-acid chain: Probable pyruvate-flavodoxin oxidoreductase (1174 aa).

4Fe-4S ferredoxin-type domains lie at 680 to 709 and 736 to 765; these read EIPI…AKVV and YVLQ…NPEI. The [4Fe-4S] cluster site is built by Cys689, Cys692, Cys695, Cys699, Cys745, Cys748, Cys751, Cys755, Cys819, Cys822, Cys847, and Cys1071.

Belongs to the pyruvate:ferredoxin/flavodoxin oxidoreductase family. The cofactor is [4Fe-4S] cluster.

The catalysed reaction is oxidized [flavodoxin] + pyruvate + CoA + 2 H(+) = reduced [flavodoxin] + acetyl-CoA + CO2. Oxidoreductase required for the transfer of electrons from pyruvate to flavodoxin. This chain is Probable pyruvate-flavodoxin oxidoreductase (ydbK), found in Escherichia coli (strain K12).